Here is a 233-residue protein sequence, read N- to C-terminus: MLIVLSLGGSILAKNLDPDRFLKYANALRDISKKHTLLVVTGGGEAARDYIGAARAMGADEVTCDYIGIEITRLNARLLISALGHDAYPEIPSNYPEASKAMTSGKVVVMGGVTPGQTTDAVASILAEYLRADLLTIATSIDGVYSSDPNCDPCAVKYEKISPEKLINIVMAIEMKAGSKSPVDPVAAKIIERCKLDALVMDARNPDLLVEVICGEAAKKSPVSCGTWITAKK.

ATP is bound at residue 9 to 10; that stretch reads GS. UMP is bound at residue Gly-43. 2 residues coordinate ATP: Gly-44 and Arg-48. Residues Asp-65 and 113–119 contribute to the UMP site; that span reads VTPGQTT. Residues Thr-139, Tyr-145, and Asp-148 each coordinate ATP.

Belongs to the UMP kinase family. In terms of assembly, homohexamer.

The protein resides in the cytoplasm. It catalyses the reaction UMP + ATP = UDP + ADP. The protein operates within pyrimidine metabolism; CTP biosynthesis via de novo pathway; UDP from UMP (UMPK route): step 1/1. Inhibited by UTP. Functionally, catalyzes the reversible phosphorylation of UMP to UDP. This Methanosarcina mazei (strain ATCC BAA-159 / DSM 3647 / Goe1 / Go1 / JCM 11833 / OCM 88) (Methanosarcina frisia) protein is Uridylate kinase.